Consider the following 343-residue polypeptide: L-rhamnose-proton symporter (343 aa).

A run of 10 helical transmembrane segments spans residues 4–24, 38–58, 68–88, 101–121, 137–157, 175–195, 207–227, 254–274, 289–309, and 320–340; these read AIIL…CFYA, WSIG…YLLL, FSIA…IGNI, MGIG…TPIL, TLLG…AGLL, LILA…MDAA, INSL…GAII, LLIT…LQFF, MSWM…GLLL, and VAVL…VGLG.

The protein belongs to the L-rhamnose transporter (TC 2.A.7.6) family.

It localises to the cell inner membrane. It carries out the reaction L-rhamnopyranose(in) + H(+)(in) = L-rhamnopyranose(out) + H(+)(out). Uptake of L-rhamnose across the cytoplasmic membrane with the concomitant transport of protons into the cell (symport system). This is L-rhamnose-proton symporter from Yersinia pestis bv. Antiqua (strain Antiqua).